Reading from the N-terminus, the 341-residue chain is DNA-directed RNA polymerase subunit alpha (341 aa).

The tract at residues 1 to 233 (MIRDEIPISA…NLFIPFLHAE (233 aa)) is alpha N-terminal domain (alpha-NTD). Positions 265–341 (TKGVTFKHIF…NLPKNKLHFH (77 aa)) are alpha C-terminal domain (alpha-CTD).

It belongs to the RNA polymerase alpha chain family. In plastids the minimal PEP RNA polymerase catalytic core is composed of four subunits: alpha, beta, beta', and beta''. When a (nuclear-encoded) sigma factor is associated with the core the holoenzyme is formed, which can initiate transcription.

It localises to the plastid. It is found in the chloroplast. The catalysed reaction is RNA(n) + a ribonucleoside 5'-triphosphate = RNA(n+1) + diphosphate. Its function is as follows. DNA-dependent RNA polymerase catalyzes the transcription of DNA into RNA using the four ribonucleoside triphosphates as substrates. This Takakia lepidozioides (Moss) protein is DNA-directed RNA polymerase subunit alpha.